Reading from the N-terminus, the 406-residue chain is 8-amino-7-oxononanoate synthase (406 aa).

Arginine 21 is a binding site for substrate. 112 to 113 (GY) provides a ligand contact to pyridoxal 5'-phosphate. Histidine 137 lines the substrate pocket. Pyridoxal 5'-phosphate contacts are provided by serine 183, histidine 211, and threonine 239. Lysine 242 carries the post-translational modification N6-(pyridoxal phosphate)lysine. Residue threonine 358 coordinates substrate.

This sequence belongs to the class-II pyridoxal-phosphate-dependent aminotransferase family. BioF subfamily. As to quaternary structure, homodimer. The cofactor is pyridoxal 5'-phosphate.

It carries out the reaction 6-carboxyhexanoyl-[ACP] + L-alanine + H(+) = (8S)-8-amino-7-oxononanoate + holo-[ACP] + CO2. It participates in cofactor biosynthesis; biotin biosynthesis. In terms of biological role, catalyzes the decarboxylative condensation of pimeloyl-[acyl-carrier protein] and L-alanine to produce 8-amino-7-oxononanoate (AON), [acyl-carrier protein], and carbon dioxide. The sequence is that of 8-amino-7-oxononanoate synthase from Burkholderia cenocepacia (strain HI2424).